The primary structure comprises 131 residues: Hyastatin (131 aa).

Positions 1–16 (MRVLLILVSLAALAHA) are cleaved as a signal peptide. Cystine bridges form between Cys-103-Cys-117, Cys-107-Cys-124, and Cys-118-Cys-125. Residue Lys-130 is modified to Lysine amide.

As to expression, strongly expressed in hemocytes, with weaker expression in gills and epidermis. Expressed at low levels in hepatopancreas.

It localises to the cytoplasmic granule. In terms of biological role, antimicrobial peptide. Has strong antibacterial activity against the Gram-positive bacterium C.glutamicum (MIC=0.4 uM) and the Gram-negative bacterium E.coli (MIC=12.5 uM). Has weak antibacterial activity against the Gram-positive bacterium S.aureus (MIC&gt;50 uM) and the Gram-negative bacterium P.aeruginosa (MIC&gt;50 uM). Has antifungal activity against S.cerevisiae (MIC=12.5) and C.albicans (MIC=6.3 uM). Has weak antifungal activity against the mold B.cinerea. Presents chitin-binding activity. The protein is Hyastatin of Hyas araneus (Atlantic lyre crab).